A 279-amino-acid polypeptide reads, in one-letter code: 3-methyl-2-oxobutanoate hydroxymethyltransferase (279 aa).

Mg(2+)-binding residues include Asp-44 and Asp-83. 3-methyl-2-oxobutanoate-binding positions include 44-45 (DS), Asp-83, and Lys-112. Residue Glu-114 participates in Mg(2+) binding. Glu-180 functions as the Proton acceptor in the catalytic mechanism.

The protein belongs to the PanB family. As to quaternary structure, homodecamer; pentamer of dimers. Mg(2+) is required as a cofactor.

It localises to the cytoplasm. The catalysed reaction is 3-methyl-2-oxobutanoate + (6R)-5,10-methylene-5,6,7,8-tetrahydrofolate + H2O = 2-dehydropantoate + (6S)-5,6,7,8-tetrahydrofolate. It functions in the pathway cofactor biosynthesis; (R)-pantothenate biosynthesis; (R)-pantoate from 3-methyl-2-oxobutanoate: step 1/2. In terms of biological role, catalyzes the reversible reaction in which hydroxymethyl group from 5,10-methylenetetrahydrofolate is transferred onto alpha-ketoisovalerate to form ketopantoate. The chain is 3-methyl-2-oxobutanoate hydroxymethyltransferase from Chloroflexus aggregans (strain MD-66 / DSM 9485).